We begin with the raw amino-acid sequence, 94 residues long: Ubiquitin-like protein ATG12B (94 aa).

Ala2 is subject to N-acetylalanine. Gly94 is covalently cross-linked (Glycyl lysine isopeptide (Gly-Lys) (interchain with K-128 in ATG5)).

The protein belongs to the ATG12 family. Ubiquitous.

Its subcellular location is the cytoplasm. In terms of biological role, ubiquitin-like protein involved in cytoplasm to vacuole transport (Cvt) and autophagy vesicles formation. Conjugation with ATG5 through a ubiquitin-like conjugating system involving also ATG7 as an E1-like activating enzyme and ATG10 as an E2-like conjugating enzyme, is essential for its function. ATG12/ATG5 conjugate has an essential role in plant nutrient recycling. The protein is Ubiquitin-like protein ATG12B (ATG12B) of Arabidopsis thaliana (Mouse-ear cress).